The sequence spans 206 residues: Undecaprenyl-diphosphatase (206 aa).

Helical transmembrane passes span 5-25 (YYWILLLLFLILSIYIKLIGG), 53-73 (FLSKYGREYVWIPVTALLLIF), 79-99 (IGITLVISFVIAIVLGEVSKY), 138-158 (VTLLLTSPKWMWILGIIEAVL), and 164-184 (VYVGVHWPLDVIAGWLLGSWI).

The protein resides in the cell membrane. The enzyme catalyses di-trans,octa-cis-undecaprenyl diphosphate + H2O = di-trans,octa-cis-undecaprenyl phosphate + phosphate + H(+). The protein is Undecaprenyl-diphosphatase (sepP) of Sulfolobus acidocaldarius (strain ATCC 33909 / DSM 639 / JCM 8929 / NBRC 15157 / NCIMB 11770).